Here is a 591-residue protein sequence, read N- to C-terminus: Aspartate--tRNA(Asp/Asn) ligase (591 aa).

Residue E174 participates in L-aspartate binding. The interval 198–201 (QLFK) is aspartate. Residue R220 coordinates L-aspartate. ATP is bound by residues 220–222 (RDE) and Q229. H450 contributes to the L-aspartate binding site. E483 is a binding site for ATP. An L-aspartate-binding site is contributed by R490. 535–538 (GLDR) provides a ligand contact to ATP.

It belongs to the class-II aminoacyl-tRNA synthetase family. Type 1 subfamily. As to quaternary structure, homodimer.

It is found in the cytoplasm. It catalyses the reaction tRNA(Asx) + L-aspartate + ATP = L-aspartyl-tRNA(Asx) + AMP + diphosphate. Aspartyl-tRNA synthetase with relaxed tRNA specificity since it is able to aspartylate not only its cognate tRNA(Asp) but also tRNA(Asn). Reaction proceeds in two steps: L-aspartate is first activated by ATP to form Asp-AMP and then transferred to the acceptor end of tRNA(Asp/Asn). This is Aspartate--tRNA(Asp/Asn) ligase from Pseudomonas putida (strain W619).